A 230-amino-acid chain; its full sequence is RNA polymerase sigma factor FliA (230 aa).

Residues 6-78 (LWQRYVPLVR…MLDELRSRDW (73 aa)) form a sigma-70 factor domain-2 region. The Interaction with polymerase core subunit RpoC motif lies at 33 to 36 (DLLQ). A sigma-70 factor domain-3 region spans residues 86–156 (NAREVASAMQ…VEPMLEGHED (71 aa)). A sigma-70 factor domain-4 region spans residues 175 to 223 (AIEALPEREKMVLTLYYQEELNLKEIGAVLEVGESRVSQLHSQAIKRLR). Residues 197–216 (LKEIGAVLEVGESRVSQLHS) constitute a DNA-binding region (H-T-H motif).

Belongs to the sigma-70 factor family. FliA subfamily.

The protein localises to the cytoplasm. Its function is as follows. Sigma factors are initiation factors that promote the attachment of RNA polymerase to specific initiation sites and are then released. This sigma factor controls the expression of flagella-related genes. The protein is RNA polymerase sigma factor FliA of Yersinia enterocolitica.